A 63-amino-acid chain; its full sequence is Sperm protamine P1 (63 aa).

The segment at 1–47 (MARCRRHIRSRSRSRNQCQRRRRRSHYNRRRTYRRSRRHSRRRRVRR) is disordered.

Belongs to the protamine P1 family. As to expression, testis.

It is found in the nucleus. Its subcellular location is the chromosome. Functionally, protamines substitute for histones in the chromatin of sperm during the haploid phase of spermatogenesis. They compact sperm DNA into a highly condensed, stable and inactive complex. This chain is Sperm protamine P1 (PRM1), found in Planigale tenuirostris (Narrow-nosed planigale).